The chain runs to 641 residues: Raffinose carrier protein (641 aa).

Residues 1–506 form a permease region; the sequence is MQEEHNYKWV…GQVIPLAQVN (506 aa). 12 helical membrane passes run 25–45, 57–77, 93–113, 120–140, 168–188, 201–221, 253–273, 288–308, 317–337, 342–362, 394–414, and 429–449; these read AFYS…LFDT, LVTL…PFIG, WVVV…TNLG, AMIY…FYSF, LGST…VIFF, WFIF…GVGL, LLWA…LGSL, FSIL…LFPV, GVFA…TIAG, LVLL…LVVL, FGGA…GMTT, and FKLT…GIFS. The region spanning 507-611 is the PTS EIIA type-1 domain; the sequence is DPTFAAGTLG…DDTVIMTVTN (105 aa). Residue H559 is modified to Phosphohistidine; by HPr.

It in the N-terminal section; belongs to the sodium:galactoside symporter (TC 2.A.2) family.

The protein localises to the cell membrane. The protein is Raffinose carrier protein (rafP) of Pediococcus pentosaceus.